The sequence spans 212 residues: Leucine efflux protein (212 aa).

The next 6 helical transmembrane spans lie at 12-32 (TYLVGAIFIVLVPGPNTLFVL), 49-69 (GVFIGDAVLMFLAWAGVATLI), 71-91 (TTPILFNIVRYLGAFYLLYLG), 122-142 (ILSLTNPKAILFYVSFFVQFI), 153-173 (FFILAATLELVSFCYLSFLII), and 188-208 (LAKVGNSLIGLMFVGFAARLA).

This sequence belongs to the Rht family.

Its subcellular location is the cell inner membrane. It carries out the reaction L-leucine(in) + H(+)(out) = L-leucine(out) + H(+)(in). Leucine export is inhibited by the proton ionophore carbonyl cyanide m-chlorophenylhydrazone (CCCP). Its function is as follows. Exporter of leucine. Can also transport its natural analog L-alpha-amino-n-butyric acid and some other structurally unrelated amino acids. Leucine excretion is probably driven by proton motive force. The protein is Leucine efflux protein of Escherichia coli (strain K12).